Reading from the N-terminus, the 127-residue chain is Aspartate 1-decarboxylase (127 aa).

Ser-25 functions as the Schiff-base intermediate with substrate; via pyruvic acid in the catalytic mechanism. The residue at position 25 (Ser-25) is a Pyruvic acid (Ser). Position 57 (Thr-57) interacts with substrate. Residue Tyr-58 is the Proton donor of the active site. 73–75 (GAA) is a binding site for substrate.

It belongs to the PanD family. In terms of assembly, heterooctamer of four alpha and four beta subunits. Pyruvate serves as cofactor. In terms of processing, is synthesized initially as an inactive proenzyme, which is activated by self-cleavage at a specific serine bond to produce a beta-subunit with a hydroxyl group at its C-terminus and an alpha-subunit with a pyruvoyl group at its N-terminus.

It localises to the cytoplasm. The catalysed reaction is L-aspartate + H(+) = beta-alanine + CO2. The protein operates within cofactor biosynthesis; (R)-pantothenate biosynthesis; beta-alanine from L-aspartate: step 1/1. In terms of biological role, catalyzes the pyruvoyl-dependent decarboxylation of aspartate to produce beta-alanine. In Clostridium kluyveri (strain NBRC 12016), this protein is Aspartate 1-decarboxylase.